A 175-amino-acid chain; its full sequence is Peptide deformylase (175 aa).

Residues Cys96 and His138 each contribute to the Fe cation site. The active site involves Glu139. His142 lines the Fe cation pocket.

It belongs to the polypeptide deformylase family. Fe(2+) serves as cofactor.

It catalyses the reaction N-terminal N-formyl-L-methionyl-[peptide] + H2O = N-terminal L-methionyl-[peptide] + formate. In terms of biological role, removes the formyl group from the N-terminal Met of newly synthesized proteins. Requires at least a dipeptide for an efficient rate of reaction. N-terminal L-methionine is a prerequisite for activity but the enzyme has broad specificity at other positions. The polypeptide is Peptide deformylase (Campylobacter jejuni subsp. jejuni serotype O:2 (strain ATCC 700819 / NCTC 11168)).